A 245-amino-acid polypeptide reads, in one-letter code: 8-amino-3,8-dideoxy-manno-octulosonate cytidylyltransferase (245 aa).

Belongs to the KdsB family.

It localises to the cytoplasm. The catalysed reaction is 8-amino-3,8-dideoxy-alpha-D-manno-octulosonate + CTP = CMP-8-amino-3,8-dideoxy-alpha-D-manno-oct-2-ulosonate + diphosphate. It participates in bacterial outer membrane biogenesis; lipopolysaccharide biosynthesis. Its function is as follows. Activates KDO8N (a required 8-carbon sugar) for incorporation into bacterial lipopolysaccharide in the Shewanella genus. This chain is 8-amino-3,8-dideoxy-manno-octulosonate cytidylyltransferase, found in Shewanella woodyi (strain ATCC 51908 / MS32).